The primary structure comprises 126 residues: Small ribosomal subunit protein eS6 (126 aa).

It belongs to the eukaryotic ribosomal protein eS6 family.

The protein is Small ribosomal subunit protein eS6 of Nanoarchaeum equitans (strain Kin4-M).